The chain runs to 593 residues: MEQPEDMASLSEFDSLAGSIPATKVEITVSCRNLLDKDMFSKSDPLCVMYTQGMENKQWREFGRTEVIDNTLNPDFVRKFIVDYFFEEKQNLRFDLYDVDSKSPDLSKHDFLGQAFCTLGEIVGSPGSRLEKPLTIGAFSLNSRTGKPMPAVSNGGVPGKKCGTIILSAEELSNCRDVATMQFCANKLDKKDFFGKSDPFLVFYRSNEDGTFTICHKTEVMKNTLNPVWQTFSIPVRALCNGDYDRTIKVEVYDWDRDGSHDFIGEFTTSYRELARGQSQFNIYEVVNPKKKMKKKKYVNSGTVTLLSFAVESECTFLDYIKGGTQINFTVAIDFTASNGNPSQSTSLHYMSPYQLNAYALALTAVGEIIQHYDSDKMFPALGFGAKLPPDGRVSHEFPLNGNQENPSCCGIDGILEAYHRSLRTVQLYGPTNFAPVVTHVARNAAAVQDGSQYSVLLIITDGVISDMAQTKEAIVNAAKLPMSIIIVGVGQAEFDAMVELDGDDVRISSRGKLAERDIVQFVPFRDYVDRTGNHVLSMARLARDVLAEIPDQLVSYMKAQGIRPRPPPAAPTHSPSQSPARTPPASPLHTHI.

One can recognise a C2 1 domain in the interval 2–134 (EQPEDMASLS…SPGSRLEKPL (133 aa)). Serine 19 is subject to Phosphoserine. 7 residues coordinate Ca(2+): aspartate 38, aspartate 44, aspartate 98, aspartate 100, serine 103, lysine 108, and aspartate 110. The residue at position 103 (serine 103) is a Phosphoserine. Residue serine 140 is modified to Phosphoserine. Residues 161 to 284 (KCGTIILSAE…ARGQSQFNIY (124 aa)) enclose the C2 2 domain. The Ca(2+) site is built by aspartate 192, aspartate 198, aspartate 254, aspartate 256, and aspartate 262. The region spanning 328–554 (NFTVAIDFTA…DVLAEIPDQL (227 aa)) is the VWFA domain. Positions 562 to 593 (GIRPRPPPAAPTHSPSQSPARTPPASPLHTHI) are disordered. A compositionally biased stretch (low complexity) spans 572–581 (PTHSPSQSPA).

This sequence belongs to the copine family. Ca(2+) serves as cofactor. Expressed in the brain, heart, stomach, spleen, lymph node and testis. Expressed in melanocytes.

The protein resides in the perikaryon. Its subcellular location is the cell projection. Functionally, probable calcium-dependent phospholipid-binding protein that may play a role in calcium-mediated intracellular processes. Plays a role in dendrite formation by melanocytes. In Homo sapiens (Human), this protein is Copine-5.